The chain runs to 242 residues: Transcriptional activator protein RaiR (242 aa).

The HTH luxR-type domain occupies 177-242; sequence KVADLPRLSR…EQLLGPRRSN (66 aa). The H-T-H motif DNA-binding region spans 201-220; sequence AKQICARLSISVSAVQLYLA.

Belongs to the autoinducer-regulated transcriptional regulatory protein family.

The chain is Transcriptional activator protein RaiR (raiR) from Rhizobium etli.